A 51-amino-acid polypeptide reads, in one-letter code: uncharacterized protein (51 aa).

It to E.coli YdfA.

This is an uncharacterized protein from Escherichia coli O157:H7.